Here is a 410-residue protein sequence, read N- to C-terminus: Protein king tubby 1 (410 aa).

2 disordered regions span residues 44 to 109 (QFMM…STRH) and 121 to 159 (ISPALMNNNGGSHHDSSSGKSVEHSSPQASGHNDTEGDV). Polar residues predominate over residues 47–72 (MSPNNPDQILTSTGNASVTTTPTSPY). A compositionally biased stretch (basic and acidic residues) spans 132–143 (SHHDSSSGKSVE).

Belongs to the TUB family.

The protein resides in the cytoplasm. Its subcellular location is the nucleus. This chain is Protein king tubby 1 (king-tubby1), found in Aedes aegypti (Yellowfever mosquito).